The primary structure comprises 195 residues: COMM domain-containing protein 3 (195 aa).

The COMM domain occupies histidine 124–serine 192.

The protein belongs to the COMM domain-containing protein 3 family. Component of the commander complex consisting of the CCC subcomplex and the retriever subcomplex. Component of the CCC subcomplex.

Functionally, scaffold protein in the commander complex that is essential for endosomal recycling of transmembrane cargos; the commander complex is composed of the CCC subcomplex and the retriever subcomplex. The polypeptide is COMM domain-containing protein 3 (commd3) (Dictyostelium discoideum (Social amoeba)).